Here is a 389-residue protein sequence, read N- to C-terminus: Phosphopentomutase (389 aa).

6 residues coordinate Mn(2+): Asp-10, Asp-282, His-287, Asp-323, His-324, and His-335.

The protein belongs to the phosphopentomutase family. The cofactor is Mn(2+).

It is found in the cytoplasm. The enzyme catalyses 2-deoxy-alpha-D-ribose 1-phosphate = 2-deoxy-D-ribose 5-phosphate. The catalysed reaction is alpha-D-ribose 1-phosphate = D-ribose 5-phosphate. Its pathway is carbohydrate degradation; 2-deoxy-D-ribose 1-phosphate degradation; D-glyceraldehyde 3-phosphate and acetaldehyde from 2-deoxy-alpha-D-ribose 1-phosphate: step 1/2. In terms of biological role, isomerase that catalyzes the conversion of deoxy-ribose 1-phosphate (dRib-1-P) and ribose 1-phosphate (Rib-1-P) to deoxy-ribose 5-phosphate (dRib-5-P) and ribose 5-phosphate (Rib-5-P), respectively. The sequence is that of Phosphopentomutase from Clostridium kluyveri (strain NBRC 12016).